The primary structure comprises 310 residues: Carbamate kinase (310 aa).

The protein belongs to the carbamate kinase family.

It localises to the cytoplasm. The enzyme catalyses hydrogencarbonate + NH4(+) + ATP = carbamoyl phosphate + ADP + H2O + H(+). The protein operates within metabolic intermediate metabolism; carbamoyl phosphate degradation; CO(2) and NH(3) from carbamoyl phosphate: step 1/1. This chain is Carbamate kinase (arcC), found in Staphylococcus epidermidis (strain ATCC 35984 / DSM 28319 / BCRC 17069 / CCUG 31568 / BM 3577 / RP62A).